Consider the following 78-residue polypeptide: Cell division topological specificity factor (78 aa).

It belongs to the MinE family.

Prevents the cell division inhibition by proteins MinC and MinD at internal division sites while permitting inhibition at polar sites. This ensures cell division at the proper site by restricting the formation of a division septum at the midpoint of the long axis of the cell. This Helicobacter hepaticus (strain ATCC 51449 / 3B1) protein is Cell division topological specificity factor.